Here is a 136-residue protein sequence, read N- to C-terminus: ATP synthase epsilon chain (136 aa).

Positions 104–136 (AGMEGQPASPEKVKAQQQLNEARARMQASKSAD) are disordered.

This sequence belongs to the ATPase epsilon chain family. In terms of assembly, F-type ATPases have 2 components, CF(1) - the catalytic core - and CF(0) - the membrane proton channel. CF(1) has five subunits: alpha(3), beta(3), gamma(1), delta(1), epsilon(1). CF(0) has three main subunits: a, b and c.

It is found in the cellular thylakoid membrane. In terms of biological role, produces ATP from ADP in the presence of a proton gradient across the membrane. This is ATP synthase epsilon chain from Synechococcus sp. (strain CC9902).